The chain runs to 61 residues: Small ribosomal subunit protein uS14 (61 aa).

Positions 24, 27, 40, and 43 each coordinate Zn(2+).

The protein belongs to the universal ribosomal protein uS14 family. Zinc-binding uS14 subfamily. As to quaternary structure, part of the 30S ribosomal subunit. Contacts proteins S3 and S10. Zn(2+) serves as cofactor.

Functionally, binds 16S rRNA, required for the assembly of 30S particles and may also be responsible for determining the conformation of the 16S rRNA at the A site. This is Small ribosomal subunit protein uS14 from Parafrankia sp. (strain EAN1pec).